A 500-amino-acid polypeptide reads, in one-letter code: 4-aminobutyrate aminotransferase, mitochondrial (500 aa).

Residues 1–27 (MAFLLTTRRLVCSSQKNLHLFTPGSRY) constitute a mitochondrion transit peptide. Cysteine 163 lines the [2Fe-2S] cluster pocket. Position 164–165 (164–165 (GS)) interacts with pyridoxal 5'-phosphate. Cysteine 166 lines the [2Fe-2S] cluster pocket. Residue arginine 220 coordinates substrate. Residue lysine 231 is modified to N6-succinyllysine. Position 252 is an N6-acetyllysine; alternate (lysine 252). Lysine 252 bears the N6-succinyllysine; alternate mark. Lysine 279 and lysine 318 each carry N6-acetyllysine. Lysine 357 carries the post-translational modification N6-(pyridoxal phosphate)lysine. A pyridoxal 5'-phosphate-binding site is contributed by threonine 381. At lysine 413 the chain carries N6-acetyllysine; alternate. Residue lysine 413 is modified to N6-succinyllysine; alternate. Lysine 452 and lysine 470 each carry N6-acetyllysine.

Belongs to the class-III pyridoxal-phosphate-dependent aminotransferase family. As to quaternary structure, homodimer; disulfide-linked. Requires pyridoxal 5'-phosphate as cofactor. [2Fe-2S] cluster is required as a cofactor.

The protein resides in the mitochondrion matrix. It catalyses the reaction 4-aminobutanoate + 2-oxoglutarate = succinate semialdehyde + L-glutamate. The enzyme catalyses (S)-3-amino-2-methylpropanoate + 2-oxoglutarate = 2-methyl-3-oxopropanoate + L-glutamate. Catalyzes the conversion of gamma-aminobutyrate and L-beta-aminoisobutyrate to succinate semialdehyde and methylmalonate semialdehyde, respectively. Can also convert delta-aminovalerate and beta-alanine. The chain is 4-aminobutyrate aminotransferase, mitochondrial from Rattus norvegicus (Rat).